Here is a 77-residue protein sequence, read N- to C-terminus: uncharacterized protein (77 aa).

Disordered regions lie at residues 1–34 and 56–77; these read MSRAYLADNDKGWAKKKGADSHATPRPHKQTKMN and LDGDIRRGGNKKSERVSGFSGR. Positions 8 to 20 are enriched in basic and acidic residues; that stretch reads DNDKGWAKKKGAD. Positions 25-34 are enriched in basic residues; sequence PRPHKQTKMN. A compositionally biased stretch (basic and acidic residues) spans 56–70; that stretch reads LDGDIRRGGNKKSER.

This is an uncharacterized protein from Dictyostelium discoideum (Social amoeba).